A 183-amino-acid chain; its full sequence is MQAPRAALVFALVIALVPVGRGNYEELENSGDTTVESERPNKVTIPSTFAAVTIKETLNANINSTNFAPDENQLEFILMVLIPLILLVLLLLSVVFLATYYKRKRTKQEPSSQGSQSALQTYELGSENVKVPIFEEDTPSVMEIEMEELDKWMNSMNRNADFECLPTLKEEKESNHNPSDSES.

The signal sequence occupies residues 1–22; sequence MQAPRAALVFALVIALVPVGRG. Over 23 to 75 the chain is Extracellular; the sequence is NYEELENSGDTTVESERPNKVTIPSTFAAVTIKETLNANINSTNFAPDENQLE. The helical transmembrane segment at 76 to 96 threads the bilayer; it reads FILMVLIPLILLVLLLLSVVF. The Cytoplasmic portion of the chain corresponds to 97-183; the sequence is LATYYKRKRT…SNHNPSDSES (87 aa). A disordered region spans residues 163–183; that stretch reads ECLPTLKEEKESNHNPSDSES. At Ser-179 the chain carries Phosphoserine.

Its subcellular location is the membrane. This chain is Transmembrane protein 154 (TMEM154), found in Homo sapiens (Human).